The following is a 266-amino-acid chain: NAD kinase 2 (266 aa).

Asp51 serves as the catalytic Proton acceptor. Residues 51-52 (DG), 123-124 (NE), Arg150, Asp152, 163-168 (TGYSKS), and Ala187 each bind NAD(+).

It belongs to the NAD kinase family. Requires a divalent metal cation as cofactor.

It is found in the cytoplasm. It catalyses the reaction NAD(+) + ATP = ADP + NADP(+) + H(+). Involved in the regulation of the intracellular balance of NAD and NADP, and is a key enzyme in the biosynthesis of NADP. Catalyzes specifically the phosphorylation on 2'-hydroxyl of the adenosine moiety of NAD to yield NADP. The sequence is that of NAD kinase 2 from Oceanobacillus iheyensis (strain DSM 14371 / CIP 107618 / JCM 11309 / KCTC 3954 / HTE831).